Reading from the N-terminus, the 245-residue chain is 1-(5-phosphoribosyl)-5-[(5-phosphoribosylamino)methylideneamino] imidazole-4-carboxamide isomerase (245 aa).

D8 functions as the Proton acceptor in the catalytic mechanism. D131 acts as the Proton donor in catalysis.

This sequence belongs to the HisA/HisF family.

The protein resides in the cytoplasm. The catalysed reaction is 1-(5-phospho-beta-D-ribosyl)-5-[(5-phospho-beta-D-ribosylamino)methylideneamino]imidazole-4-carboxamide = 5-[(5-phospho-1-deoxy-D-ribulos-1-ylimino)methylamino]-1-(5-phospho-beta-D-ribosyl)imidazole-4-carboxamide. It functions in the pathway amino-acid biosynthesis; L-histidine biosynthesis; L-histidine from 5-phospho-alpha-D-ribose 1-diphosphate: step 4/9. The chain is 1-(5-phosphoribosyl)-5-[(5-phosphoribosylamino)methylideneamino] imidazole-4-carboxamide isomerase from Neisseria meningitidis serogroup C (strain 053442).